Consider the following 326-residue polypeptide: Glycerol-3-phosphate dehydrogenase [NAD(P)+] (326 aa).

NADPH contacts are provided by Trp-13, Arg-33, and Lys-107. Residues Lys-107, Gly-135, and Ser-137 each coordinate sn-glycerol 3-phosphate. Ala-139 contributes to the NADPH binding site. Residues Lys-190, Asp-243, Ser-253, Arg-254, and Asn-255 each contribute to the sn-glycerol 3-phosphate site. Residue Lys-190 is the Proton acceptor of the active site. Arg-254 is an NADPH binding site. NADPH is bound by residues Leu-273 and Glu-275.

The protein belongs to the NAD-dependent glycerol-3-phosphate dehydrogenase family.

It localises to the cytoplasm. It carries out the reaction sn-glycerol 3-phosphate + NAD(+) = dihydroxyacetone phosphate + NADH + H(+). The catalysed reaction is sn-glycerol 3-phosphate + NADP(+) = dihydroxyacetone phosphate + NADPH + H(+). It participates in membrane lipid metabolism; glycerophospholipid metabolism. Functionally, catalyzes the reduction of the glycolytic intermediate dihydroxyacetone phosphate (DHAP) to sn-glycerol 3-phosphate (G3P), the key precursor for phospholipid synthesis. The chain is Glycerol-3-phosphate dehydrogenase [NAD(P)+] from Brucella ovis (strain ATCC 25840 / 63/290 / NCTC 10512).